The chain runs to 226 residues: MSKKGKKYIEAFSKVDKSKFYSIEDAISLLKEIKFVKFDETIDISVNLNLKKNHTVRDTIVLPNQFMKPKRILVFAKGDRADEARAFGATYVGDDDLINKIKSGWDEFDIVVATPDMMKDVGRLGPILGKRGLMPNPKTQTVTNNLKDAINSLKKGRTEFRANKNGVISFSFGKSSMDNEKIKENYEEFIKEVVKKRPSDLKGTFIDSIYISSTMGPSIRVEFVWR.

The protein belongs to the universal ribosomal protein uL1 family. Part of the 50S ribosomal subunit.

Its function is as follows. Binds directly to 23S rRNA. The L1 stalk is quite mobile in the ribosome, and is involved in E site tRNA release. In terms of biological role, protein L1 is also a translational repressor protein, it controls the translation of the L11 operon by binding to its mRNA. In Borreliella afzelii (strain PKo) (Borrelia afzelii), this protein is Large ribosomal subunit protein uL1.